We begin with the raw amino-acid sequence, 541 residues long: Glucose-6-phosphate isomerase (541 aa).

The active-site Proton donor is the E346. Residues H377 and K506 contribute to the active site.

The protein belongs to the GPI family.

It is found in the cytoplasm. It carries out the reaction alpha-D-glucose 6-phosphate = beta-D-fructose 6-phosphate. It participates in carbohydrate biosynthesis; gluconeogenesis. The protein operates within carbohydrate degradation; glycolysis; D-glyceraldehyde 3-phosphate and glycerone phosphate from D-glucose: step 2/4. Catalyzes the reversible isomerization of glucose-6-phosphate to fructose-6-phosphate. The chain is Glucose-6-phosphate isomerase from Rhizobium leguminosarum bv. trifolii (strain WSM2304).